The chain runs to 548 residues: MGSLSSEEDDEVSSERCGSYSPSADISESESSSSFSCHRFDGEGASSSIPSSPRVVAGRGFYFPAPVMLPVIGGKDVVWDDKQPDNDLSEIEMMKERFAKLLLGEDMSGGGKGVCTALAISNAITNLSATVFGELWRLEPLAPQKKAMWRRELEWLLCVSDSIVELIPSIQQFPGGGTYEIMETRPRSDLYANLPALKKLDAMLIDMLDAFSDTEFWYTDRGIVLGDCDKDSYNSPASVRQEDKWWLPCPKVPPNGLSEEARKKLQQCRDFANQILKAALAINSGVLAEMEIPDPYLETLPKSGKECLGEIIYQYLTANKFSPECLLDCLDLSSEHQTLEIANRIEAAVHVWRQKNGRRHKKQAKLKLSSWGGKVKGLVNDNERNDFLVQRAETLLQSLRIRFPGLPQTTLDMNKIQYNKDVGQSILESYSRVMESMAFNITARIDDVLYVDDAMRRSISVTESLSLFSINGLNPQKAFSVQSSPHGSPFATPALSVASRSPRRAPPLYSVKRNGTREKGIVGETEKAWSYAGNLSSRRVTGVTPERD.

A compositionally biased stretch (acidic residues) spans 1 to 12 (MGSLSSEEDDEV). Residues 1–38 (MGSLSSEEDDEVSSERCGSYSPSADISESESSSSFSCH) form a disordered region. A compositionally biased stretch (low complexity) spans 19–36 (SYSPSADISESESSSSFS). Residues 81 to 462 (DKQPDNDLSE…DAMRRSISVT (382 aa)) enclose the PRONE domain. The segment at 458-548 (SISVTESLSL…RVTGVTPERD (91 aa)) is involved in auto-inhibition. Residues serine 460 and serine 480 each carry the phosphoserine modification.

As to quaternary structure, interacts with ARAC10/ROP11 and FER. Forms a complex with ARAC11/ROP1 and PRK2. Interacts in vitro (via PRONE domain) with PRK1, PRK2, PRK3 and PRK4. The C-terminal region is also important for the interaction with PRK2. Post-translationally, phosphorylated at Ser-460 and Ser-480 by PRK2. As to expression, expressed in roots, cotyledons, leaves, stems, sepals, petals, anthers, pollen grains, stigmas and siliques.

The protein localises to the cytoplasm. It is found in the cytosol. The protein resides in the cell membrane. Phosphorylation at Ser-460 and Ser-480 by PRK2 releases ROPGEF1 auto-inhibition, thereby activating ROPGEF1, which in turn activates ARAC11/ROP1. In terms of biological role, guanine-nucleotide exchange factor (GEF) that acts as an activator of Rop (Rho of plants) GTPases by promoting the exchange of GDP for GTP. Acts downstream of PRK2 in the control of polarized pollen tube growth by activating ARAC11/ROP1. In association with ROPGEF4, acts as a specific regulator of ARAC10/ROP11 function in ABA-mediated stomatal closure. May play a role in the Rac/Rop-signaling pathway that controls ROS-mediated root hair development. The protein is Rop guanine nucleotide exchange factor 1 (ROPGEF1) of Arabidopsis thaliana (Mouse-ear cress).